A 312-amino-acid chain; its full sequence is MDPVPSSASHGNLDEQIAQLMQCKPLSEQEVRGLCEKAKEILMEESNVQPVKSPVTICGDIHGQFHDLAELFRIGGKCPDTNYLFMGDYVDRGYYSVETVTLLVALKVRYPQRITILRGNHESRQITQVYGFYDECLRKYGNANVWKTFTDLFDYFPLTALVESEIFCLHGGLSPSIETLDNIRNFDRVQEVPHEGAMCDLLWSDPDDRCGWGISPRGAGYTFGQDISEQFNHTNNLKLIARAHQLVMEGFNWAHDQKVVTIFSAPNYCYRCGNMASILEVDDSRERTFIQFEPAPRRGEPDVTRRTPDYFL.

Residues D60, H62, D88, and N120 each contribute to the Mn(2+) site. The active-site Proton donor is H121. Positions 170 and 244 each coordinate Mn(2+).

Belongs to the PPP phosphatase family. PP-2A subfamily. It depends on Mn(2+) as a cofactor.

It localises to the cytoplasm. The enzyme catalyses O-phospho-L-seryl-[protein] + H2O = L-seryl-[protein] + phosphate. The catalysed reaction is O-phospho-L-threonyl-[protein] + H2O = L-threonyl-[protein] + phosphate. The polypeptide is Serine/threonine-protein phosphatase PP2A catalytic subunit (Nicotiana tabacum (Common tobacco)).